A 213-amino-acid chain; its full sequence is dITP/XTP pyrophosphatase (213 aa).

7-12 (TSNLDK) provides a ligand contact to substrate. The active-site Proton acceptor is D74. D74 provides a ligand contact to Mg(2+). Substrate-binding positions include S75, 165–168 (FGYD), K188, and 193–194 (HR).

This sequence belongs to the HAM1 NTPase family. Homodimer. Requires Mg(2+) as cofactor.

It carries out the reaction XTP + H2O = XMP + diphosphate + H(+). The enzyme catalyses dITP + H2O = dIMP + diphosphate + H(+). It catalyses the reaction ITP + H2O = IMP + diphosphate + H(+). Its function is as follows. Pyrophosphatase that catalyzes the hydrolysis of nucleoside triphosphates to their monophosphate derivatives, with a high preference for the non-canonical purine nucleotides XTP (xanthosine triphosphate), dITP (deoxyinosine triphosphate) and ITP. Seems to function as a house-cleaning enzyme that removes non-canonical purine nucleotides from the nucleotide pool, thus preventing their incorporation into DNA/RNA and avoiding chromosomal lesions. This chain is dITP/XTP pyrophosphatase, found in Campylobacter concisus (strain 13826).